The sequence spans 377 residues: MSHNPIRPWRNIDRRKSRQIMVGNVPVGGDAPITVQTMTNTLTTDASATIKQVIAAAEAGADIVRVSVPDADSARAMHEICRESPVPIVADIHFHYKRGIEAAEAGAACLRINPGNIGDAARVKEVVKAARDHNCSIRIGVNAGSLEKHLLEKYGEPCPDAMVESGMDHIKLLEDNDFHEFKISMKASDIFMTAAAYQQLADQTDAPFHMGITEAGGFVGGTVKSAIGLGNLLWAGIGDTMRVSLSADPVEEVKIGFEILKSLGLRHRGVNIISCPSCARQGFDVIKTVEVLEQRLEHIKTPMSLSIIGCVVNGPGEALMTDVGFTGGGAGSGMVYLAGKQSHKMSNEQMVDHIVEQVEKRAEAIEAQAKAADQAAE.

[4Fe-4S] cluster contacts are provided by cysteine 275, cysteine 278, cysteine 310, and glutamate 317.

Belongs to the IspG family. The cofactor is [4Fe-4S] cluster.

The enzyme catalyses (2E)-4-hydroxy-3-methylbut-2-enyl diphosphate + oxidized [flavodoxin] + H2O + 2 H(+) = 2-C-methyl-D-erythritol 2,4-cyclic diphosphate + reduced [flavodoxin]. The protein operates within isoprenoid biosynthesis; isopentenyl diphosphate biosynthesis via DXP pathway; isopentenyl diphosphate from 1-deoxy-D-xylulose 5-phosphate: step 5/6. Functionally, converts 2C-methyl-D-erythritol 2,4-cyclodiphosphate (ME-2,4cPP) into 1-hydroxy-2-methyl-2-(E)-butenyl 4-diphosphate. The polypeptide is 4-hydroxy-3-methylbut-2-en-1-yl diphosphate synthase (flavodoxin) (Jannaschia sp. (strain CCS1)).